The primary structure comprises 663 residues: Protein LNK2 (663 aa).

Disordered regions lie at residues 528 to 549 (HYTS…VIPR) and 590 to 663 (MEGP…KRKL). A compositionally biased stretch (basic and acidic residues) spans 602–629 (GTEEKGNFPKCSIRETHLTKQKAQKEEG). Positions 639-648 (APNSGSSSTV) are enriched in polar residues.

In terms of assembly, interacts with CCA1, LHY, REV4 and REV8, but not with PRR7 or PRR9. Expressed in roots, stems, leaves, seedlings, cotyledons, inflorescences and siliques. Highest expression in root tips, young leaves and vasculatur tissues.

It localises to the nucleus. Its function is as follows. Transcriptional coactivator necessary for expression of the clock genes PRR5 and TOC1. Antagonizes REV8 function in the regulation of anthocyanin accumulation. Involved in red light input to the clock. Activates clock-controlled genes with afternoon peak. Mediates light inhibition of hypocotyl elongation. Unable to bind to DNA, but recruited to the evening element (EE)-containing region of the PRR5 and TOC1 promoters through its interaction with the DNA binding proteins REV8 and REV4. The sequence is that of Protein LNK2 from Arabidopsis thaliana (Mouse-ear cress).